The sequence spans 180 residues: ATP synthase subunit delta (180 aa).

This sequence belongs to the ATPase delta chain family. F-type ATPases have 2 components, F(1) - the catalytic core - and F(0) - the membrane proton channel. F(1) has five subunits: alpha(3), beta(3), gamma(1), delta(1), epsilon(1). F(0) has three main subunits: a(1), b(2) and c(10-14). The alpha and beta chains form an alternating ring which encloses part of the gamma chain. F(1) is attached to F(0) by a central stalk formed by the gamma and epsilon chains, while a peripheral stalk is formed by the delta and b chains.

It localises to the cell membrane. Its function is as follows. F(1)F(0) ATP synthase produces ATP from ADP in the presence of a proton or sodium gradient. F-type ATPases consist of two structural domains, F(1) containing the extramembraneous catalytic core and F(0) containing the membrane proton channel, linked together by a central stalk and a peripheral stalk. During catalysis, ATP synthesis in the catalytic domain of F(1) is coupled via a rotary mechanism of the central stalk subunits to proton translocation. This protein is part of the stalk that links CF(0) to CF(1). It either transmits conformational changes from CF(0) to CF(1) or is implicated in proton conduction. The protein is ATP synthase subunit delta of Mycoplasma mobile (strain ATCC 43663 / 163K / NCTC 11711) (Mesomycoplasma mobile).